Reading from the N-terminus, the 471-residue chain is Glutamate--tRNA ligase (471 aa).

The short motif at 9 to 19 is the 'HIGH' region element; that stretch reads PSPTGYLHVGG. Residues Cys-98, Cys-100, Cys-125, and His-127 each contribute to the Zn(2+) site. The 'KMSKS' region signature appears at 237-241; the sequence is KLSKR. Residue Lys-240 coordinates ATP.

It belongs to the class-I aminoacyl-tRNA synthetase family. Glutamate--tRNA ligase type 1 subfamily. Monomer. Zn(2+) is required as a cofactor.

The protein localises to the cytoplasm. It catalyses the reaction tRNA(Glu) + L-glutamate + ATP = L-glutamyl-tRNA(Glu) + AMP + diphosphate. In terms of biological role, catalyzes the attachment of glutamate to tRNA(Glu) in a two-step reaction: glutamate is first activated by ATP to form Glu-AMP and then transferred to the acceptor end of tRNA(Glu). This is Glutamate--tRNA ligase from Escherichia coli (strain ATCC 8739 / DSM 1576 / NBRC 3972 / NCIMB 8545 / WDCM 00012 / Crooks).